We begin with the raw amino-acid sequence, 483 residues long: MKTLNRRDFPGAQYPERIIQFGEGNFLRAFVDWQIDLLNEHTDLNSGVVVVRPIETSFPPSLSTQDGLYTTIIRGLNEKGEAVSDARLIRSVNREISVYSEYDEFLKLAHNPEMRFVFSNTTEAGISYHAGDKFDDAPAVSYPAKLTRLLFERFSHFNGALDKGWIIIPCELIDYNGDALRELVLRYAQEWALPEAFIQWLDQANSFCSTLVDRIVTGYPRDEVAKLEEELGYHDDFLDTAEHFYLFVIQGPKSLATELRLDKYPLNVLIVDDIKPYKERKVAILNGAHTALVPVAFQAGLDTVGEAMNDAEICAFVEKAIYEEIIPVLDLPRDELESFASAVTGRFRNPYIKHQLLSIALNGMTKFRTRILPQLLAGQKANGTLPARLTFALAALIAFYRGERNGETYPVQDDAHWLERYQQLWSQHRDRVIGTQELVAIVLAEKDHWEQDLTQVPGLVEQVANDLDAILEKGMREAVRPLC.

18 to 29 (IIQFGEGNFLRA) provides a ligand contact to NAD(+).

It belongs to the mannitol dehydrogenase family. UxaB subfamily.

The catalysed reaction is D-altronate + NAD(+) = keto-D-tagaturonate + NADH + H(+). It functions in the pathway carbohydrate metabolism; pentose and glucuronate interconversion. The sequence is that of Altronate oxidoreductase (uxaB) from Shigella flexneri.